Consider the following 37-residue polypeptide: Large ribosomal subunit protein bL36A (37 aa).

The protein belongs to the bacterial ribosomal protein bL36 family.

This is Large ribosomal subunit protein bL36A from Clavibacter sepedonicus (Clavibacter michiganensis subsp. sepedonicus).